The sequence spans 94 residues: Large ribosomal subunit protein bL25 (94 aa).

Belongs to the bacterial ribosomal protein bL25 family. Part of the 50S ribosomal subunit; part of the 5S rRNA/L5/L18/L25 subcomplex. Contacts the 5S rRNA. Binds to the 5S rRNA independently of L5 and L18.

Its function is as follows. This is one of the proteins that binds to the 5S RNA in the ribosome where it forms part of the central protuberance. The protein is Large ribosomal subunit protein bL25 of Pectobacterium carotovorum subsp. carotovorum (strain PC1).